Here is a 35-residue protein sequence, read N- to C-terminus: UPF0387 membrane protein YohO (35 aa).

Residues 6–26 (IGVIALFLFMAFGGIGGVMLA) form a helical membrane-spanning segment.

It belongs to the UPF0387 family.

It localises to the cell inner membrane. In Escherichia coli O8 (strain IAI1), this protein is UPF0387 membrane protein YohO.